We begin with the raw amino-acid sequence, 183 residues long: Inner membrane-spanning protein YciB (183 aa).

5 consecutive transmembrane segments (helical) span residues 22-44 (IYTA…WVRY), 54-74 (TFLL…DAFI), 76-96 (WKVT…RYGF), 119-139 (VNLA…YVAF), and 149-169 (FKVF…GVYL).

The protein belongs to the YciB family.

It is found in the cell inner membrane. Plays a role in cell envelope biogenesis, maintenance of cell envelope integrity and membrane homeostasis. The chain is Inner membrane-spanning protein YciB from Aeromonas salmonicida (strain A449).